Reading from the N-terminus, the 305-residue chain is uncharacterized protein (305 aa).

This sequence belongs to the IIV-6 436R family.

This is an uncharacterized protein from Acheta domesticus (House cricket).